A 117-amino-acid polypeptide reads, in one-letter code: Large ribosomal subunit protein bL20 (117 aa).

This sequence belongs to the bacterial ribosomal protein bL20 family.

Binds directly to 23S ribosomal RNA and is necessary for the in vitro assembly process of the 50S ribosomal subunit. It is not involved in the protein synthesizing functions of that subunit. The polypeptide is Large ribosomal subunit protein bL20 (Crocosphaera subtropica (strain ATCC 51142 / BH68) (Cyanothece sp. (strain ATCC 51142))).